The chain runs to 352 residues: Protein-glutamate methylesterase/protein-glutamine glutaminase (352 aa).

The region spanning 5–123 is the Response regulatory domain; the sequence is RILIVDDSVI…SKEKAIEYIR (119 aa). Aspartate 56 bears the 4-aspartylphosphate mark. In terms of domain architecture, CheB-type methylesterase spans 166 to 352; the sequence is EIVAIGVSTG…LAEEIIRRIG (187 aa). Active-site residues include serine 173, histidine 200, and aspartate 296.

It belongs to the CheB family. Phosphorylated by CheA. Phosphorylation of the N-terminal regulatory domain activates the methylesterase activity.

Its subcellular location is the cytoplasm. It carries out the reaction [protein]-L-glutamate 5-O-methyl ester + H2O = L-glutamyl-[protein] + methanol + H(+). The enzyme catalyses L-glutaminyl-[protein] + H2O = L-glutamyl-[protein] + NH4(+). Functionally, involved in chemotaxis. Part of a chemotaxis signal transduction system that modulates chemotaxis in response to various stimuli. Catalyzes the demethylation of specific methylglutamate residues introduced into the chemoreceptors (methyl-accepting chemotaxis proteins or MCP) by CheR. Also mediates the irreversible deamidation of specific glutamine residues to glutamic acid. This chain is Protein-glutamate methylesterase/protein-glutamine glutaminase, found in Trichodesmium erythraeum (strain IMS101).